Consider the following 213-residue polypeptide: ER lumen protein-retaining receptor (213 aa).

Residues 1-2 lie on the Lumenal side of the membrane; sequence MN. Residues 3–21 form a helical membrane-spanning segment; sequence IFRITADLAHAVAIVILLL. The Cytoplasmic portion of the chain corresponds to 22 to 35; sequence KIWKSRSCEGISGR. The helical transmembrane segment at 36-53 threads the bilayer; sequence SQILFAVTFFTRYLDLFT. At 54–61 the chain is on the lumenal side; it reads SFYSLYNT. A helical transmembrane segment spans residues 62–80; that stretch reads VMKVLFLAGSIGTVYLMWV. Over 81 to 96 the chain is Cytoplasmic; that stretch reads KFKATYDRNNDTFRIE. Residues 97-110 form a helical membrane-spanning segment; sequence FLVIPSIILALIIN. Topologically, residues 111 to 117 are lumenal; the sequence is HEFMFME. The chain crosses the membrane as a helical span at residues 118 to 137; the sequence is VMWTFSIYLEAVAIMPQLFM. Topologically, residues 138-149 are cytoplasmic; the sequence is LSRTGNAETITA. Residues 150 to 168 traverse the membrane as a helical segment; that stretch reads HYLFALGSYRFLYIFNWVY. The Lumenal segment spans residues 169-178; the sequence is RYYTESFFDP. A helical membrane pass occupies residues 179-199; the sequence is IAVVAGIVQTVLYADFFYLYI. Topologically, residues 200–213 are cytoplasmic; it reads TRVIQSNRQFEMSA.

This sequence belongs to the ERD2 family.

The protein localises to the endoplasmic reticulum membrane. In terms of biological role, required for the retention of luminal endoplasmic reticulum proteins. Determines the specificity of the luminal ER protein retention system. Also required for normal vesicular traffic through the Golgi. The polypeptide is ER lumen protein-retaining receptor (erd-2.1) (Caenorhabditis briggsae).